The following is a 287-amino-acid chain: Nucleotide-binding protein MXAN_6564 (287 aa).

13 to 20 is a binding site for ATP; sequence GMSGSGKS. 62–65 contacts GTP; sequence DVRE.

The protein belongs to the RapZ-like family.

Its function is as follows. Displays ATPase and GTPase activities. The chain is Nucleotide-binding protein MXAN_6564 from Myxococcus xanthus (strain DK1622).